The chain runs to 392 residues: MLSIIHVGWLELVWFVALYPFACWTLFAVLKSVYRITLHPLAKFPGPKLAGASYCYEFWYEIVCGIQYTQKIIKLHEQYGPIVRINPDELHFNDIDFVDVVYTAGARKRDKSRHYLAGFEGSIIRFVSSDFHSFLIDTRVKKPERLKRVVLGAERHHDAKDCPMFLELLNSNLPAQEKSKQRLMYEANGATLAGSGSTAIALSNIVYNLVANPRIGHKLRSELMRKVSASKNLPTWSTLEELPYLTAVIHEGLRSMYDPSKERLPYDPSQERLPRVATEEELIYEGGSALGKSKYVIPRGYAISTSAHVVHSDESIFPNASQFDPERWLDRDGQRNKELERHLLSFSKGSRHCLGMHCRRATCLAIPASARNGTSGYQFTSGQLEYKVQERQ.

A helical transmembrane segment spans residues 10–30 (LELVWFVALYPFACWTLFAVL). N319 is a glycosylation site (N-linked (GlcNAc...) asparagine). Residue C353 coordinates heme. The N-linked (GlcNAc...) asparagine glycan is linked to N372.

Belongs to the cytochrome P450 family. Requires heme as cofactor.

It localises to the membrane. Its pathway is secondary metabolite biosynthesis. Functionally, cytochrome P450 monooxygenase; part of the gene cluster that mediates the biosynthesis of pyrrolopyrazines, secondary metabolites showing insecticidal activity. The role of ppzE within the pathway has still to be determined. The single multifunctional NRPS ppzA is sufficient to produce peramine via condensation of 1-pyrroline-5-carboxylate and arginine, N-methylation of the alpha-amino group of arginine and reduction of the thioester and the cyclization to form an iminium ion resulting in release from the peptide synthetase. Deprotonation of this intermediate and oxidation of the pyrroline ring would give rise to peramine. In Epichloe species that produce only peramine, the peramine synthetase gene is not localized in a gene cluster, in contrast to Metarhizium species that contain additional pyrrolopyrazine biosynthesis genes. The 2-oxoglutarate-Fe(II) type oxidoreductase ppzC hydroxylates peramine to yield the newly identified compound 8-hydroxyperamine whereas ppzD converts L-proline into trans-4-hydroxy-L-proline, a precursor of peramine biosynthesis. The sequence is that of Cytochrome P450 monooxygenase ppzE from Metarhizium rileyi (strain RCEF 4871) (Nomuraea rileyi).